Reading from the N-terminus, the 77-residue chain is Acyl carrier protein (77 aa).

In terms of domain architecture, Carrier spans 2 to 77 (SDIAARVKKI…DATKFISEAQ (76 aa)). An O-(pantetheine 4'-phosphoryl)serine modification is found at Ser-37.

Belongs to the acyl carrier protein (ACP) family. Post-translationally, 4'-phosphopantetheine is transferred from CoA to a specific serine of apo-ACP by AcpS. This modification is essential for activity because fatty acids are bound in thioester linkage to the sulfhydryl of the prosthetic group.

The protein localises to the cytoplasm. The protein operates within lipid metabolism; fatty acid biosynthesis. In terms of biological role, carrier of the growing fatty acid chain in fatty acid biosynthesis. This chain is Acyl carrier protein, found in Jannaschia sp. (strain CCS1).